Reading from the N-terminus, the 192-residue chain is Cytochrome c4 (192 aa).

2 Cytochrome c domains span residues 12-90 (GDPQ…ATQP) and 99-191 (ELAS…QGLS). 6 residues coordinate heme c: Cys-25, Cys-28, His-29, Cys-120, Cys-123, and His-124.

In terms of processing, binds 2 heme c groups covalently per subunit.

It is found in the periplasm. Its function is as follows. Diheme, high potential cytochrome c believed to be an intermediate electron donor in an anaerobic electron transport chain. The chain is Cytochrome c4 from Thiocapsa roseopersicina.